The primary structure comprises 355 residues: Heat-inducible transcription repressor HrcA (355 aa).

It belongs to the HrcA family.

Functionally, negative regulator of class I heat shock genes (grpE-dnaK-dnaJ and groELS operons). Prevents heat-shock induction of these operons. The protein is Heat-inducible transcription repressor HrcA of Prosthecochloris aestuarii (strain DSM 271 / SK 413).